Reading from the N-terminus, the 137-residue chain is Large ribosomal subunit protein uL13 (137 aa).

Arg55 is modified (citrulline). Ser73 carries the phosphoserine modification. Arg136 is modified (citrulline).

It belongs to the universal ribosomal protein uL13 family. Component of the 60S ribosome. Component of the GAIT complex. Interacts with EIF4G1. Post-translationally, phosphorylation at Ser-73 upon interferon-gamma treatment in macrophages involves a DAPK1-DAPK3 kinase cascade and is causing release from the ribosome, association with the GAIT complex and subsequent involvement in transcript-selective translation inhibition. In terms of processing, citrullinated by PADI4.

It localises to the cytoplasm. Associated with ribosomes but is not required for canonical ribosome function and has extra-ribosomal functions. Component of the GAIT (gamma interferon-activated inhibitor of translation) complex which mediates interferon-gamma-induced transcript-selective translation inhibition in inflammation processes. Upon interferon-gamma activation and subsequent phosphorylation dissociates from the ribosome and assembles into the GAIT complex which binds to stem loop-containing GAIT elements in the 3'-UTR of diverse inflammatory mRNAs (such as ceruplasmin) and suppresses their translation. In the GAIT complex interacts with m7G cap-bound eIF4G at or near the eIF3-binding site and blocks the recruitment of the 43S ribosomal complex. Involved in methylation of rRNA. The protein is Large ribosomal subunit protein uL13 (RPL13A) of Sus scrofa (Pig).